Reading from the N-terminus, the 448-residue chain is Adenylosuccinate synthetase (448 aa).

GTP-binding positions include 22 to 28 (GDEGKGK) and 50 to 52 (GHT). Residue D23 is the Proton acceptor of the active site. Mg(2+) is bound by residues D23 and G50. IMP contacts are provided by residues 23–26 (DEGK), 48–51 (NAGH), T139, R153, Q234, T249, and R321. The Proton donor role is filled by H51. Residue 317-323 (SVTGRPR) participates in substrate binding. GTP is bound by residues R323, 349-351 (KLD), and 431-433 (STG).

Belongs to the adenylosuccinate synthetase family. In terms of assembly, homodimer. Mg(2+) serves as cofactor.

Its subcellular location is the cytoplasm. The enzyme catalyses IMP + L-aspartate + GTP = N(6)-(1,2-dicarboxyethyl)-AMP + GDP + phosphate + 2 H(+). Its pathway is purine metabolism; AMP biosynthesis via de novo pathway; AMP from IMP: step 1/2. Its function is as follows. Plays an important role in the de novo pathway of purine nucleotide biosynthesis. Catalyzes the first committed step in the biosynthesis of AMP from IMP. This Burkholderia pseudomallei (strain 1106a) protein is Adenylosuccinate synthetase.